A 100-amino-acid chain; its full sequence is Urease subunit gamma (100 aa).

This sequence belongs to the urease gamma subunit family. As to quaternary structure, heterotrimer of UreA (gamma), UreB (beta) and UreC (alpha) subunits. Three heterotrimers associate to form the active enzyme.

It is found in the cytoplasm. The enzyme catalyses urea + 2 H2O + H(+) = hydrogencarbonate + 2 NH4(+). It functions in the pathway nitrogen metabolism; urea degradation; CO(2) and NH(3) from urea (urease route): step 1/1. This Shewanella halifaxensis (strain HAW-EB4) protein is Urease subunit gamma.